The chain runs to 110 residues: Nucleoid-associated protein Mvan_5528 (110 aa).

This sequence belongs to the YbaB/EbfC family. In terms of assembly, homodimer.

It localises to the cytoplasm. It is found in the nucleoid. Binds to DNA and alters its conformation. May be involved in regulation of gene expression, nucleoid organization and DNA protection. The protein is Nucleoid-associated protein Mvan_5528 of Mycolicibacterium vanbaalenii (strain DSM 7251 / JCM 13017 / BCRC 16820 / KCTC 9966 / NRRL B-24157 / PYR-1) (Mycobacterium vanbaalenii).